Consider the following 453-residue polypeptide: tRNA modification GTPase MnmE (453 aa).

Positions 22, 79, and 119 each coordinate (6S)-5-formyl-5,6,7,8-tetrahydrofolate. The 162-residue stretch at 215 to 376 (GMKVVIAGRP…LKQHLKSLMG (162 aa)) folds into the TrmE-type G domain. Asparagine 225 lines the K(+) pocket. Residues 225–230 (NAGKSS), 244–250 (TEIAGTT), 269–272 (DTAG), and 334–337 (NKAD) each bind GTP. Position 229 (serine 229) interacts with Mg(2+). Residues threonine 244, isoleucine 246, and threonine 249 each coordinate K(+). Threonine 250 contacts Mg(2+). Position 453 (lysine 453) interacts with (6S)-5-formyl-5,6,7,8-tetrahydrofolate.

Belongs to the TRAFAC class TrmE-Era-EngA-EngB-Septin-like GTPase superfamily. TrmE GTPase family. Homodimer. Heterotetramer of two MnmE and two MnmG subunits. Requires K(+) as cofactor.

The protein resides in the cytoplasm. Exhibits a very high intrinsic GTPase hydrolysis rate. Involved in the addition of a carboxymethylaminomethyl (cmnm) group at the wobble position (U34) of certain tRNAs, forming tRNA-cmnm(5)s(2)U34. The protein is tRNA modification GTPase MnmE of Shewanella baltica (strain OS185).